We begin with the raw amino-acid sequence, 305 residues long: Acetylglutamate kinase (305 aa).

Residues 75–76 (GG), Arg97, and Asn202 contribute to the substrate site.

This sequence belongs to the acetylglutamate kinase family. ArgB subfamily.

The protein resides in the cytoplasm. It carries out the reaction N-acetyl-L-glutamate + ATP = N-acetyl-L-glutamyl 5-phosphate + ADP. It functions in the pathway amino-acid biosynthesis; L-arginine biosynthesis; N(2)-acetyl-L-ornithine from L-glutamate: step 2/4. Functionally, catalyzes the ATP-dependent phosphorylation of N-acetyl-L-glutamate. The sequence is that of Acetylglutamate kinase from Rhodospirillum centenum (strain ATCC 51521 / SW).